Reading from the N-terminus, the 427-residue chain is Glutamate-1-semialdehyde 2,1-aminomutase (427 aa).

K267 is subject to N6-(pyridoxal phosphate)lysine.

Belongs to the class-III pyridoxal-phosphate-dependent aminotransferase family. HemL subfamily. As to quaternary structure, homodimer. Pyridoxal 5'-phosphate is required as a cofactor.

The protein resides in the cytoplasm. The catalysed reaction is (S)-4-amino-5-oxopentanoate = 5-aminolevulinate. It participates in porphyrin-containing compound metabolism; protoporphyrin-IX biosynthesis; 5-aminolevulinate from L-glutamyl-tRNA(Glu): step 2/2. The chain is Glutamate-1-semialdehyde 2,1-aminomutase from Sulfurihydrogenibium azorense (strain DSM 15241 / OCM 825 / Az-Fu1).